The sequence spans 407 residues: Phosphopentomutase (407 aa).

Positions 10, 306, 311, 347, 348, and 359 each coordinate Mn(2+).

This sequence belongs to the phosphopentomutase family. The cofactor is Mn(2+).

The protein localises to the cytoplasm. It carries out the reaction 2-deoxy-alpha-D-ribose 1-phosphate = 2-deoxy-D-ribose 5-phosphate. It catalyses the reaction alpha-D-ribose 1-phosphate = D-ribose 5-phosphate. It participates in carbohydrate degradation; 2-deoxy-D-ribose 1-phosphate degradation; D-glyceraldehyde 3-phosphate and acetaldehyde from 2-deoxy-alpha-D-ribose 1-phosphate: step 1/2. Its function is as follows. Isomerase that catalyzes the conversion of deoxy-ribose 1-phosphate (dRib-1-P) and ribose 1-phosphate (Rib-1-P) to deoxy-ribose 5-phosphate (dRib-5-P) and ribose 5-phosphate (Rib-5-P), respectively. The protein is Phosphopentomutase of Sodalis glossinidius (strain morsitans).